The chain runs to 145 residues: Transmembrane protein 170A (145 aa).

The Lumenal segment spans residues 1-50 (MIEALIVGEMQDVQIGFVKQILSLNLVPRSNNTTCGNNTSLCDFSEMWYG). N-linked (GlcNAc...) asparagine glycans are attached at residues Asn31 and Asn37. The helical transmembrane segment at 51–71 (VFLWAVVSSLIFHLPAALLAL) threads the bilayer. At 72-81 (ATLRRHKVAR) the chain is on the cytoplasmic side. A helical transmembrane segment spans residues 82–102 (FFPLGILLMGIIGPLFGGVLT). The Lumenal segment spans residues 103 to 117 (SAAIAGVYKAAGKSM). Residues 118–138 (FSLEALVFGVGQSLFIFIISF) traverse the membrane as a helical segment. Residues 139-145 (LRILATL) lie on the Cytoplasmic side of the membrane.

The protein belongs to the TMEM170 family.

Its subcellular location is the endoplasmic reticulum membrane. It localises to the nucleus envelope. May regulate membrane morphogenesis in the endoplasmic reticulum (ER) by promoting ER sheet formation at the expense of ER tubules. This chain is Transmembrane protein 170A (tmem170a), found in Danio rerio (Zebrafish).